Here is a 247-residue protein sequence, read N- to C-terminus: MSHRDTLFSAPIARLGDWTFDERVAEVFPDMIQRSVPGYSNIISMIGMLAERFVQPGTQVYDLGCSLGAATLSVRRNIHHDNCKIIAIDNSPAMIERCRHHIDAYKAPTPVDVIEGDIRDIAIENASMVVLNFTLQFLEPSERQALLDKIYQGLNPGGALVLSEKFSFEDAKVGELLFNMHHDFKRANGYSELEISQKRSMLENVMLTDSVETHKARLHQAGFEHSELWFQCFNFGSLVALKAEDAA.

Residues Tyr39, Gly64–Ser66, Asp89–Asn90, Asp117–Ile118, Asn132, and Arg199 contribute to the S-adenosyl-L-methionine site.

It belongs to the class I-like SAM-binding methyltransferase superfamily. Cx-SAM synthase family. In terms of assembly, homodimer.

It catalyses the reaction prephenate + S-adenosyl-L-methionine = carboxy-S-adenosyl-L-methionine + 3-phenylpyruvate + H2O. Functionally, catalyzes the conversion of S-adenosyl-L-methionine (SAM) to carboxy-S-adenosyl-L-methionine (Cx-SAM). This Escherichia coli O7:K1 (strain IAI39 / ExPEC) protein is Carboxy-S-adenosyl-L-methionine synthase.